Consider the following 251-residue polypeptide: Aquaporin TIP1-1 (251 aa).

Position 1 is an N-acetylmethionine (Met1). Topologically, residues 1–23 are cytoplasmic; sequence MPIRNIAIGRPDEATRPDALKAA. Residues 24–44 form a helical membrane-spanning segment; the sequence is LAEFISTLIFVVAGSGSGMAF. Over 45–56 the chain is Vacuolar; the sequence is NKLTENGATTPS. The chain crosses the membrane as a helical span at residues 57 to 77; the sequence is GLVAAAVAHAFGLFVAVSVGA. Topologically, residues 78 to 103 are cytoplasmic; that stretch reads NISGGHVNPAVTFGAFIGGNITLLRG. An NPA 1 motif is present at residues 85 to 87; sequence NPA. The chain crosses the membrane as a helical span at residues 104-124; it reads ILYWIAQLLGSVVACLILKFA. At 125-143 the chain is on the vacuolar side; the sequence is TGGLAVPAFGLSAGVGVLN. A helical transmembrane segment spans residues 144–164; the sequence is AFVFEIVMTFGLVYTVYATAI. Residues 165 to 172 are Cytoplasmic-facing; sequence DPKNGSLG. Residues 173-193 form a helical membrane-spanning segment; that stretch reads TIAPIAIGFIVGANILAGGAF. At 194 to 218 the chain is on the vacuolar side; the sequence is SGASMNPAVAFGPAVVSWTWTNHWV. Residues 199–201 carry the NPA 2 motif; that stretch reads NPA. A helical membrane pass occupies residues 219–239; the sequence is YWAGPLVGGGIAGLIYEVFFI. Residues 240–251 lie on the Cytoplasmic side of the membrane; the sequence is NTTHEQLPTTDY.

It belongs to the MIP/aquaporin (TC 1.A.8) family. TIP (TC 1.A.8.10) subfamily. Interacts with cucumber mosaic virus (CMV) Protein 1a. In terms of tissue distribution, in all the vegetative organs, but not in seeds. Preferentially expressed in roots.

It localises to the vacuole membrane. In terms of biological role, water channel required to facilitate the transport of water, diffusion of amino acids and/or peptides from the vacuolar compartment to the cytoplasm. Does not promote glycerol permeability. May play a role in the control of cell turgor and cell expansion. Its function is impaired by Hg(2+). May be involved in a vesicle-based metabolite routing through or between pre-vacuolar compartments and the central vacuole. Transports urea in yeast cells in a pH-independent manner. Transports H(2)O(2) in yeast cells. The sequence is that of Aquaporin TIP1-1 (TIP1-1) from Arabidopsis thaliana (Mouse-ear cress).